Here is a 559-residue protein sequence, read N- to C-terminus: Potassium-transporting ATPase potassium-binding subunit (559 aa).

13 helical membrane-spanning segments follow: residues 5-25 (GFLL…PLGS), 27-47 (LARL…RILW), 63-83 (LLAL…LLFW), 132-152 (GLTV…FALI), 170-190 (LVRI…LFFI), 253-273 (LAQM…FGEA), 283-303 (LLWA…WAEV), 327-347 (FGVL…CGAV), 356-376 (ALGG…FGGV), 379-399 (GLYG…LMIG), 416-436 (MTAL…ALAM), 484-504 (LLAF…MAIA), and 524-544 (GALF…LTFI).

It belongs to the KdpA family. In terms of assembly, the system is composed of three essential subunits: KdpA, KdpB and KdpC.

Its subcellular location is the cell inner membrane. Part of the high-affinity ATP-driven potassium transport (or Kdp) system, which catalyzes the hydrolysis of ATP coupled with the electrogenic transport of potassium into the cytoplasm. This subunit binds the periplasmic potassium ions and delivers the ions to the membrane domain of KdpB through an intramembrane tunnel. The polypeptide is Potassium-transporting ATPase potassium-binding subunit (Salmonella newport (strain SL254)).